Here is a 135-residue protein sequence, read N- to C-terminus: HVA22-like protein d (135 aa).

Transmembrane regions (helical) follow at residues 11–31 (LHSGAGPIVMLLYPLYASVIA), 42–62 (QWLAYWIIYSFLSLTELILQS), and 63–83 (LIEWIPIWYTVKLVFVAWLVL).

Belongs to the DP1 family. As to expression, predominantly expressed in flower buds.

The protein localises to the membrane. This is HVA22-like protein d (HVA22D) from Arabidopsis thaliana (Mouse-ear cress).